Reading from the N-terminus, the 215-residue chain is RWD domain-containing protein C1393.09c (215 aa).

The RWD domain maps to 7-114 (EEREILESIY…SVAKEETNAI (108 aa)).

Its subcellular location is the cytoplasm. It localises to the nucleus. The chain is RWD domain-containing protein C1393.09c from Schizosaccharomyces pombe (strain 972 / ATCC 24843) (Fission yeast).